Here is a 359-residue protein sequence, read N- to C-terminus: Popy class I histocompatibility antigen, alpha chain E (359 aa).

Positions 1–18 are cleaved as a signal peptide; that stretch reads GTLLLLLSEALALTETWA. The tract at residues 19–108 is alpha-1; sequence GSHSLKYFHT…LRGYYNQTEA (90 aa). Topologically, residues 19–302 are extracellular; sequence GSHSLKYFHT…EPASQTTIPI (284 aa). Asn104 is a glycosylation site (N-linked (GlcNAc...) asparagine). Residues 109–200 form an alpha-2 region; the sequence is GSHTLQWMHG…EKGKETLLHL (92 aa). Disulfide bonds link Cys119–Cys182 and Cys221–Cys277. Residues 201 to 292 are alpha-3; that stretch reads DPPKTHVTHH…GLPEPLTLRW (92 aa). In terms of domain architecture, Ig-like C1-type spans 203–291; it reads PKTHVTHHRI…EGLPEPLTLR (89 aa). Residues 293-302 are connecting peptide; that stretch reads EPASQTTIPI. The chain crosses the membrane as a helical span at residues 303–326; sequence VGIFAGLVLLGAVVTGATVVAAVM. The Cytoplasmic portion of the chain corresponds to 327-359; it reads WRKKSSGGKGGSYSKAEWSDSAQGSESLTACKA. The tract at residues 330–359 is disordered; sequence KSSGGKGGSYSKAEWSDSAQGSESLTACKA. Polar residues predominate over residues 346–359; sequence DSAQGSESLTACKA. A Phosphoserine modification is found at Ser351.

This sequence belongs to the MHC class I family. As to quaternary structure, heterodimer of an alpha chain and a beta chain (beta-2-microglobulin).

The protein localises to the membrane. Its function is as follows. Involved in the presentation of foreign antigens to the immune system. This chain is Popy class I histocompatibility antigen, alpha chain E (Popy-E), found in Pongo pygmaeus (Bornean orangutan).